Reading from the N-terminus, the 72-residue chain is Cytochrome c oxidase subunit 8C, mitochondrial (72 aa).

The N-terminal 29 residues, 1 to 29, are a transit peptide targeting the mitochondrion; that stretch reads MSRLLQFCSSLLRHRVVLFSKPGHSGRLS. Residues 30–40 lie on the Mitochondrial matrix side of the membrane; the sequence is HSESPQNQVLT. Residues 41-64 traverse the membrane as a helical segment; it reads PTESVVGIVVFFATFFIPAAYVMS. At 65 to 72 the chain is on the mitochondrial intermembrane side; sequence NLKFFKGE.

It belongs to the cytochrome c oxidase VIII family. In terms of assembly, component of the cytochrome c oxidase (complex IV, CIV), a multisubunit enzyme composed of 14 subunits. The complex is composed of a catalytic core of 3 subunits MT-CO1, MT-CO2 and MT-CO3, encoded in the mitochondrial DNA, and 11 supernumerary subunits COX4I, COX5A, COX5B, COX6A, COX6B, COX6C, COX7A, COX7B, COX7C, COX8 and NDUFA4, which are encoded in the nuclear genome. The complex exists as a monomer or a dimer and forms supercomplexes (SCs) in the inner mitochondrial membrane with NADH-ubiquinone oxidoreductase (complex I, CI) and ubiquinol-cytochrome c oxidoreductase (cytochrome b-c1 complex, complex III, CIII), resulting in different assemblies (supercomplex SCI(1)III(2)IV(1) and megacomplex MCI(2)III(2)IV(2)).

It localises to the mitochondrion inner membrane. The protein operates within energy metabolism; oxidative phosphorylation. In terms of biological role, component of the cytochrome c oxidase, the last enzyme in the mitochondrial electron transport chain which drives oxidative phosphorylation. The respiratory chain contains 3 multisubunit complexes succinate dehydrogenase (complex II, CII), ubiquinol-cytochrome c oxidoreductase (cytochrome b-c1 complex, complex III, CIII) and cytochrome c oxidase (complex IV, CIV), that cooperate to transfer electrons derived from NADH and succinate to molecular oxygen, creating an electrochemical gradient over the inner membrane that drives transmembrane transport and the ATP synthase. Cytochrome c oxidase is the component of the respiratory chain that catalyzes the reduction of oxygen to water. Electrons originating from reduced cytochrome c in the intermembrane space (IMS) are transferred via the dinuclear copper A center (CU(A)) of subunit 2 and heme A of subunit 1 to the active site in subunit 1, a binuclear center (BNC) formed by heme A3 and copper B (CU(B)). The BNC reduces molecular oxygen to 2 water molecules using 4 electrons from cytochrome c in the IMS and 4 protons from the mitochondrial matrix. This Rattus norvegicus (Rat) protein is Cytochrome c oxidase subunit 8C, mitochondrial (Cox8c).